The following is a 485-amino-acid chain: E3 ubiquitin-protein ligase RNF8 (485 aa).

The FHA domain occupies 38–92 (VTVGRGFGVTYQLVSKICPLMISRNHCVLKQNPEGQWTIMDNKSLNGVWLNRARL). The tract at residues 68-72 (QNPEG) is required for interaction with PIWIL1. Ser157 is modified (phosphoserine). The interval 181–220 (CESGQPVKSQGKGEVASTPSDNLDPKLTALEPSKTTGAPI) is disordered. The segment at 403-441 (CIICSEYFIEAVTLNCAHSFCSYCINEWMKRKIECPICR) adopts an RING-type zinc-finger fold.

It belongs to the RNF8 family. As to quaternary structure, homodimer. Forms a E2-E3 ubiquitin ligase complex composed of the RNF8 homodimer and a E2 heterodimer of UBE2N and UBE2V2. Interacts with class III E2s, including UBE2E1, UBE2E2, and UBE2E3 and with UBE2N. Interacts with RXRA. Interacts (via FHA domain) with ATM-phosphorylated MDC1. Interacts (via FHA domain) with 'Thr-4827' phosphorylated HERC2 (via C-terminus). Interacts with PIWIL1; leading to sequester RNF8 in the cytoplasm. Interacts with WRAP53/TCAB1. In terms of assembly, (Microbial infection) Interacts (via FHA domain) with phosphorylated human herpesvirus 1 ICP0 protein; leading to RNF8 degradation by the proteasome. Autoubiquitinated through 'Lys-48' and 'Lys-63' of ubiquitin. 'Lys-63' polyubiquitination is mediated by UBE2N. 'Lys-29'-type polyubiquitination is also observed, but it doesn't require its own functional RING-type zinc finger. Ubiquitous. In fetal tissues, highest expression in brain, thymus and liver. In adult tissues, highest levels in brain and testis, lowest levels in peripheral blood cells.

The protein resides in the nucleus. It localises to the cytoplasm. It is found in the midbody. Its subcellular location is the chromosome. The protein localises to the telomere. The catalysed reaction is S-ubiquitinyl-[E2 ubiquitin-conjugating enzyme]-L-cysteine + [acceptor protein]-L-lysine = [E2 ubiquitin-conjugating enzyme]-L-cysteine + N(6)-ubiquitinyl-[acceptor protein]-L-lysine.. Its pathway is protein modification; protein ubiquitination. Its function is as follows. E3 ubiquitin-protein ligase that plays a key role in DNA damage signaling via 2 distinct roles: by mediating the 'Lys-63'-linked ubiquitination of histones H2A and H2AX and promoting the recruitment of DNA repair proteins at double-strand breaks (DSBs) sites, and by catalyzing 'Lys-48'-linked ubiquitination to remove target proteins from DNA damage sites. Following DNA DSBs, it is recruited to the sites of damage by ATM-phosphorylated MDC1 and catalyzes the 'Lys-63'-linked ubiquitination of histones H2A and H2AX, thereby promoting the formation of TP53BP1 and BRCA1 ionizing radiation-induced foci (IRIF). Also controls the recruitment of UIMC1-BRCC3 (RAP80-BRCC36) and PAXIP1/PTIP to DNA damage sites. Promotes the recruitment of NBN to DNA damage sites by catalyzing 'Lys-6'-linked ubiquitination of NBN. Also recruited at DNA interstrand cross-links (ICLs) sites and catalyzes 'Lys-63'-linked ubiquitination of histones H2A and H2AX, leading to recruitment of FAAP20/C1orf86 and Fanconi anemia (FA) complex, followed by interstrand cross-link repair. H2A ubiquitination also mediates the ATM-dependent transcriptional silencing at regions flanking DSBs in cis, a mechanism to avoid collision between transcription and repair intermediates. Promotes the formation of 'Lys-63'-linked polyubiquitin chains via interactions with the specific ubiquitin-conjugating UBE2N/UBC13 and ubiquitinates non-histone substrates such as PCNA. Substrates that are polyubiquitinated at 'Lys-63' are usually not targeted for degradation. Also catalyzes the formation of 'Lys-48'-linked polyubiquitin chains via interaction with the ubiquitin-conjugating UBE2L6/UBCH8, leading to degradation of substrate proteins such as CHEK2, JMJD2A/KDM4A and KU80/XRCC5: it is still unclear how the preference toward 'Lys-48'- versus 'Lys-63'-linked ubiquitination is regulated but it could be due to RNF8 ability to interact with specific E2 specific ligases. For instance, interaction with phosphorylated HERC2 promotes the association between RNF8 and UBE2N/UBC13 and favors the specific formation of 'Lys-63'-linked ubiquitin chains. Promotes non-homologous end joining (NHEJ) by promoting the 'Lys-48'-linked ubiquitination and degradation the of KU80/XRCC5. Following DNA damage, mediates the ubiquitination and degradation of JMJD2A/KDM4A in collaboration with RNF168, leading to unmask H4K20me2 mark and promote the recruitment of TP53BP1 at DNA damage sites. Following DNA damage, mediates the ubiquitination and degradation of POLD4/p12, a subunit of DNA polymerase delta. In the absence of POLD4, DNA polymerase delta complex exhibits higher proofreading activity. In addition to its function in damage signaling, also plays a role in higher-order chromatin structure by mediating extensive chromatin decondensation. Involved in the activation of ATM by promoting histone H2B ubiquitination, which indirectly triggers histone H4 'Lys-16' acetylation (H4K16ac), establishing a chromatin environment that promotes efficient activation of ATM kinase. Required in the testis, where it plays a role in the replacement of histones during spermatogenesis. At uncapped telomeres, promotes the joining of deprotected chromosome ends by inducing H2A ubiquitination and TP53BP1 recruitment, suggesting that it may enhance cancer development by aggravating telomere-induced genome instability in case of telomeric crisis. Promotes the assembly of RAD51 at DNA DSBs in the absence of BRCA1 and TP53BP1 Also involved in class switch recombination in immune system, via its role in regulation of DSBs repair. May be required for proper exit from mitosis after spindle checkpoint activation and may regulate cytokinesis. May play a role in the regulation of RXRA-mediated transcriptional activity. Not involved in RXRA ubiquitination by UBE2E2. This Homo sapiens (Human) protein is E3 ubiquitin-protein ligase RNF8.